The chain runs to 185 residues: Riboflavin kinase (185 aa).

The Mg(2+) site is built by T41 and N43. E122 (nucleophile) is an active-site residue.

The protein belongs to the flavokinase family. The cofactor is Zn(2+). Mg(2+) is required as a cofactor.

The enzyme catalyses riboflavin + ATP = FMN + ADP + H(+). The protein operates within cofactor biosynthesis; FMN biosynthesis; FMN from riboflavin (ATP route): step 1/1. Its function is as follows. Catalyzes the phosphorylation of riboflavin (vitamin B2) to form flavin mononucleotide (FMN) coenzyme. The sequence is that of Riboflavin kinase (FMN1) from Kluyveromyces lactis (strain ATCC 8585 / CBS 2359 / DSM 70799 / NBRC 1267 / NRRL Y-1140 / WM37) (Yeast).